Reading from the N-terminus, the 490-residue chain is AP-5 complex subunit mu-1 (490 aa).

One can recognise an MHD domain in the interval 206 to 476 (KAQISISITE…LISSDYYIWN (271 aa)).

This sequence belongs to the adaptor complexes medium subunit family. In terms of assembly, probably part of the adaptor protein complex 5 (AP-5) a tetramer composed of AP5B1, AP5M1, AP5S1 and AP5Z1. Widely expressed, including in small intestine and testis. In small intestine, highly expressed in cytoplasm of villi epithelial cells and internal glands. In testis, selectively expressed in maturing sperm cells (at protein level).

The protein localises to the cytoplasm. Its subcellular location is the cytosol. It localises to the late endosome membrane. It is found in the lysosome membrane. Functionally, as part of AP-5, a probable fifth adaptor protein complex it may be involved in endosomal transport. The sequence is that of AP-5 complex subunit mu-1 (Ap5m1) from Mus musculus (Mouse).